The following is a 99-amino-acid chain: DNA-binding protein Fis (99 aa).

The segment at residues 75–94 is a DNA-binding region (H-T-H motif); sequence QTRAALMLGVNRGTLRKKLK.

The protein belongs to the transcriptional regulatory Fis family. Homodimer.

Its function is as follows. Activates ribosomal RNA transcription. Plays a direct role in upstream activation of rRNA promoters. The sequence is that of DNA-binding protein Fis from Actinobacillus succinogenes (strain ATCC 55618 / DSM 22257 / CCUG 43843 / 130Z).